Consider the following 303-residue polypeptide: MSWQQSLTDDRARQIRELVSAASAADGVAPVGDQVLRALAHDRTRHLVAVEDDGAGSRVRGYLNLAPADDDAPPMAEVVVHPDARRRGTGSAMIRAALAEGGPQTRVWAHGNLVAARATAEALGLTAVRELLQMQRPLADLPPQTTAQRVRFATYSGPHDDAEVLRVNNAAFSWHPEQGGWTDADIAERRGEPWFDPAGFFLAFDEDTGALLGFHWTKVHSESLGEVYVVGVDPAAQGRGLGAALTLLGLHHLESRLTGDGRVADVMLYVEADNTAAVKTYRRLGFDIVNTDVAYAAVAPTDV.

Residue Asp-33 coordinates 1D-myo-inositol 2-(L-cysteinylamino)-2-deoxy-alpha-D-glucopyranoside. Residues 78–80 (VVV) and 86–91 (RRGTGS) contribute to the acetyl-CoA site. In terms of domain architecture, N-acetyltransferase spans 150 to 303 (VRFATYSGPH…AYAAVAPTDV (154 aa)). 3 residues coordinate 1D-myo-inositol 2-(L-cysteinylamino)-2-deoxy-alpha-D-glucopyranoside: Glu-177, Lys-218, and Glu-226. Residue 230–232 (VGV) participates in acetyl-CoA binding. A 1D-myo-inositol 2-(L-cysteinylamino)-2-deoxy-alpha-D-glucopyranoside-binding site is contributed by Tyr-269. Acetyl-CoA is bound at residue 274–279 (NTAAVK).

Belongs to the acetyltransferase family. MshD subfamily. As to quaternary structure, monomer.

The enzyme catalyses 1D-myo-inositol 2-(L-cysteinylamino)-2-deoxy-alpha-D-glucopyranoside + acetyl-CoA = mycothiol + CoA + H(+). In terms of biological role, catalyzes the transfer of acetyl from acetyl-CoA to desacetylmycothiol (Cys-GlcN-Ins) to form mycothiol. The sequence is that of Mycothiol acetyltransferase from Mycolicibacterium gilvum (strain PYR-GCK) (Mycobacterium gilvum (strain PYR-GCK)).